A 411-amino-acid chain; its full sequence is Alpha-N-acetylgalactosaminidase (411 aa).

Positions 1–17 are cleaved as a signal peptide; the sequence is MLLKTVLLLGHVAQVLM. Cystine bridges form between Cys-38–Cys-80 and Cys-42–Cys-49. 78–79 provides a ligand contact to substrate; it reads DD. Asn-124 is a glycosylation site (N-linked (GlcNAc...) asparagine). Cys-127 and Cys-158 form a disulfide bridge. Position 154 (Lys-154) interacts with substrate. Asp-156 serves as the catalytic Nucleophile. A glycan (N-linked (GlcNAc...) asparagine) is linked at Asn-177. An intrachain disulfide couples Cys-187 to Cys-209. Ser-188 provides a ligand contact to substrate. Residue Asn-201 is glycosylated (N-linked (GlcNAc...) asparagine). Substrate is bound by residues Arg-213 and Asp-217. The active-site Proton donor is the Asp-217. 2 positions are modified to phosphoserine: Ser-322 and Ser-332. Asn-359 and Asn-385 each carry an N-linked (GlcNAc...) asparagine glycan.

This sequence belongs to the glycosyl hydrolase 27 family. Homodimer.

It localises to the lysosome. It carries out the reaction Cleavage of non-reducing alpha-(1-&gt;3)-N-acetylgalactosamine residues from human blood group A and AB mucin glycoproteins, Forssman hapten and blood group A lacto series glycolipids.. The enzyme catalyses a neolactoside IV(3)-alpha-GalNAc,IV(2)-alpha-Fuc-nLc4Cer(d18:1(4E)) + H2O = a neolactoside IV(2)-alpha-Fuc-nLc4Cer(d18:1(4E)) + N-acetyl-alpha-D-galactosamine. The catalysed reaction is a neolactoside IV(3)-alpha-GalNAc,IV(2)-alpha-Fuc-nLc4Cer(d18:0) + H2O = a neolactoside IV(2)-alpha-Fuc-nLc4Cer(d18:0) + N-acetyl-alpha-D-galactosamine. It catalyses the reaction a globoside IV3GalNAc-Gb4Cer + H2O = N-acetyl-alpha-D-galactosamine + a globoside Gb4Cer. Its function is as follows. Removes terminal alpha-N-acetylgalactosamine residues from glycolipids and glycopeptides. Required for the breakdown of glycolipids. In Homo sapiens (Human), this protein is Alpha-N-acetylgalactosaminidase.